The primary structure comprises 455 residues: CDP-diacylglycerol--serine O-phosphatidyltransferase (455 aa).

2 PLD phosphodiesterase domains span residues 134 to 160 and 356 to 383; these read VFGVLHVKGFVFDDTVLYSGASINNVY and GDNTYHLKGVWVDDRYILLTGNNLNPRA.

It belongs to the CDP-alcohol phosphatidyltransferase class-II family. In terms of assembly, multimeric.

The protein resides in the cytoplasm. Its subcellular location is the cell inner membrane. The enzyme catalyses a CDP-1,2-diacyl-sn-glycerol + L-serine = a 1,2-diacyl-sn-glycero-3-phospho-L-serine + CMP + H(+). This chain is CDP-diacylglycerol--serine O-phosphatidyltransferase (pssA), found in Haemophilus influenzae (strain ATCC 51907 / DSM 11121 / KW20 / Rd).